Consider the following 619-residue polypeptide: MPIRQLPEILINQIAAGEVVQRPASVVKELVENAIDAGATRVDIELEAAGGRLIRIRDNGHGMAAQELPLAVLRHATSKIASLDDLEAVATLGFRGEALPSIVSVSRFTLMSRRAMDEHGAVLQIEGGTLGEVIPHAHAPGTTVEVRDLFYNVPARRKFLRAERTELGHIEEWARSLALAHPDLELRLSHNGKLSRRYKPGDWYSDARLIEILGEDFAHQALRVDHSGAGLRLHGCIVQPHYSRSNTDQQYLYVNGRAVRDRSVAHAVKQAYSDVLYQGRHPAYVLFLELDPARVDVNVHPAKQEVRFRDARLIHDFVYRTVQGTLAQTRAGTPPLAVGAGDVGGEGARPPVRHAVSFSGRRGGASHVLGSYSASTAPLMQSAPSVSVADAPAAYAALYAAPPTQVIDAVPQMQTGLPLAAGAGDVPPLGYAIAQLHGIYILAECADGLIVVDMHAAHERIGYERLKRAHDGIGLRTQPLLVPMTLMVAEREADVAECEAETLASLGFEVTRSGPGSLQVRSIPALLAQAEPEILLRDVLSDLSEHGHTRRVAEARDTLLATMACHGAVRAQRRLSISEMNALLRDMEATERSGQCNHGRPTWARFSLAEIDRWFLRGR.

The protein belongs to the DNA mismatch repair MutL/HexB family.

Its function is as follows. This protein is involved in the repair of mismatches in DNA. It is required for dam-dependent methyl-directed DNA mismatch repair. May act as a 'molecular matchmaker', a protein that promotes the formation of a stable complex between two or more DNA-binding proteins in an ATP-dependent manner without itself being part of a final effector complex. In Xylella fastidiosa (strain 9a5c), this protein is DNA mismatch repair protein MutL.